A 342-amino-acid polypeptide reads, in one-letter code: Alpha-tocopherol transfer protein-like (342 aa).

The tract at residues 1–31 is disordered; sequence MSEESDSLRTSPSVASLSENELPPPPEPPGY. The segment covering 8-19 has biased composition (polar residues); it reads LRTSPSVASLSE. The CRAL-TRIO domain occupies 117-282; that stretch reads KPSALKDVLA…EYGGTAGELD (166 aa).

May act as a protein that binds a hydrophobic ligand. This chain is Alpha-tocopherol transfer protein-like (TTPAL), found in Pongo abelii (Sumatran orangutan).